The chain runs to 427 residues: Putative B3 domain-containing protein Os04g0346900 (427 aa).

2 consecutive DNA-binding regions (TF-B3) follow at residues 25–118 (LVPS…FDTT) and 140–236 (KPQF…FGPN). The disordered stretch occupies residues 253–309 (TGEQQEAPSFSRRKCNNKKKSRFGEDDGNQQEMPCSRKGSGNKGRTSDRETKRMRKT). Positions 263 to 273 (SRRKCNNKKKS) are enriched in basic residues. The segment at residues 320 to 427 (WIKKEINEYV…TLWRVDIERC (108 aa)) is a DNA-binding region (TF-B3 3).

The protein resides in the nucleus. In Oryza sativa subsp. japonica (Rice), this protein is Putative B3 domain-containing protein Os04g0346900.